The primary structure comprises 303 residues: UDP-N-acetylenolpyruvoylglucosamine reductase (303 aa).

Positions 29 to 196 (KIGGPADILI…LEAVLQLEQK (168 aa)) constitute an FAD-binding PCMH-type domain. Arginine 174 is an active-site residue. The Proton donor role is filled by serine 225. Glutamate 295 is an active-site residue.

The protein belongs to the MurB family. It depends on FAD as a cofactor.

Its subcellular location is the cytoplasm. The enzyme catalyses UDP-N-acetyl-alpha-D-muramate + NADP(+) = UDP-N-acetyl-3-O-(1-carboxyvinyl)-alpha-D-glucosamine + NADPH + H(+). It functions in the pathway cell wall biogenesis; peptidoglycan biosynthesis. In terms of biological role, cell wall formation. This Bacillus velezensis (strain DSM 23117 / BGSC 10A6 / LMG 26770 / FZB42) (Bacillus amyloliquefaciens subsp. plantarum) protein is UDP-N-acetylenolpyruvoylglucosamine reductase.